A 129-amino-acid polypeptide reads, in one-letter code: Succinate dehydrogenase subunit 3-1, mitochondrial (129 aa).

A mitochondrion-targeting transit peptide spans 1 to 58 (MEKYHSNSRFAPFRDAPFALRGALGSSGSSFSSIDSLRRSSTLEQARGYTSRPLGAVR). A compositionally biased stretch (low complexity) spans 25-35 (GSSGSSFSSID). Residues 25–80 (GSSGSSFSSIDSLRRSSTLEQARGYTSRPLGAVRPKMLPSGCRPLHTSHPLSAPVA) are disordered. Residue H87 coordinates heme. The helical transmembrane segment at 105–127 (IFGAALGAAIISIPLATKFSLMF) threads the bilayer.

In terms of assembly, component of complex II composed of eight subunits in plants: four classical SDH subunits SDH1, SDH2, SDH3 and SDH4 (a flavoprotein (FP), an iron-sulfur protein (IP), and a cytochrome b composed of a large and a small subunit.), as well as four subunits unknown in mitochondria from bacteria and heterotrophic eukaryotes. Heme is required as a cofactor.

It is found in the mitochondrion inner membrane. Its pathway is carbohydrate metabolism; tricarboxylic acid cycle. Its function is as follows. Membrane-anchoring subunit of succinate dehydrogenase (SDH). The protein is Succinate dehydrogenase subunit 3-1, mitochondrial of Oryza sativa subsp. japonica (Rice).